The following is a 197-amino-acid chain: Probable nicotinate-nucleotide adenylyltransferase (197 aa).

It belongs to the NadD family.

The enzyme catalyses nicotinate beta-D-ribonucleotide + ATP + H(+) = deamido-NAD(+) + diphosphate. It participates in cofactor biosynthesis; NAD(+) biosynthesis; deamido-NAD(+) from nicotinate D-ribonucleotide: step 1/1. In terms of biological role, catalyzes the reversible adenylation of nicotinate mononucleotide (NaMN) to nicotinic acid adenine dinucleotide (NaAD). This is Probable nicotinate-nucleotide adenylyltransferase from Thermosipho melanesiensis (strain DSM 12029 / CIP 104789 / BI429).